Reading from the N-terminus, the 500-residue chain is MRLQAVTAVAAWAVASACQSLPGTRTIWSRDADYKELSEKLSPSAKAYYPGSDEFEKANTRWSNLEVPTVNIVIVPGNENDVVETVKFANKKGLPFLAWNSAHGAMTTLGQMDSGIEIYLDQLSGVEIAEDGKTVTIAGGTKSKLVTDTLWAAGKQTVTGACECVGYIGPALGGGHGWLQGRHGTIGDQFESANIVLANGTLTSIDSSSDLWWAIKGAGHNFGIVTSVTSKTYDIEHKDWAIEILTFSGSKVVELYEAVNTHLLKNGTQPTDLINWSYWVNVPSADANNPVIQILIIQEGVNTVDSAYTTPFHSLSPITKEAHSGSYTDLAKWVGITTTDEPCQKTGAMNPRFPIYLETYNPQAQKKAFELFSDAIRGDSIFNGSLFAFDGYSTQGVRAIDEKSTAFAFRNQNVLTAPLISYMPDGPELDEKVAKLGNQLRQILHEGTGREHIPAYVNYANGDEGPEQWYGSESWRQSKLQSLKKKYDPNGMFSFYGPIA.

An N-terminal signal peptide occupies residues 1-20 (MRLQAVTAVAAWAVASACQS). The FAD-binding PCMH-type domain maps to 65–235 (LEVPTVNIVI…TSVTSKTYDI (171 aa)). Asparagine 199, asparagine 266, asparagine 275, and asparagine 383 each carry an N-linked (GlcNAc...) asparagine glycan.

It belongs to the oxygen-dependent FAD-linked oxidoreductase family. Requires FAD as cofactor.

It functions in the pathway pigment biosynthesis. FAD-linked oxidoreductase; part of the gene cluster that mediates the biosynthesis of the yellow pigment chrysogine. the NRPS chyA mediates the condensation of anthranilic acid and alanine into the intermediate 2-(2-aminopropanamido)benzoic acid. The remainder of the pathway is highly branched yielding at least 13 chrysogine-related compounds. The malonyl transferase chyE converts 2-(2-aminopropanamido)benzoic acid and 2-(2-aminopropanamido)benzamidine into 2-(2-(2-carboxyacetamido)propanamido)benzoic acid and 3-((1-((2-carbamoylphenyl)amino)-1-oxopropan-2-yl)amino)-3-oxopropanoic acid, respectively. ChyD is an amidase, being responsible for the amidation of the carboxylic acid moiety of 2-(2-aminopropanamido)benzoic acid, 2-(2-(2-carboxyacetamido)propanamido)benzoic acid and 2-(2-((4-amino-1-carboxy-4-oxobutyl)amino)propanamido)benzoic acid. ChyC is involved in the same reactions as ChyD, but plays a more minor role in the amidation reactions compared to chyD. The oxidoreductases chyH and chyM are involved in oxidation reactions that form N-pyruvoylanthranilamide from 2-(2-aminopropanamido)benzamidine and (1-((2-carbamoylphenyl)amino)-1-oxopropan-2-yl)glutamine, respectively. N-pyruvoylanthranilamide is further converted via two further branches in the pathway, yielding chrysogine and additional chrysogine-related coumpounds. Chrysogine is likely formed by a spontaneous ring closure from N-pyruvoylanthranilamide. This is FAD-linked oxidoreductase chyH from Penicillium rubens (strain ATCC 28089 / DSM 1075 / NRRL 1951 / Wisconsin 54-1255) (Penicillium chrysogenum).